Here is a 1430-residue protein sequence, read N- to C-terminus: MSIPHSAKQSSPLSSRRRSVTNTTPLLTPRHSRDNSSTQISSAKNITSSSPSTITNESSKRNKQNLVLSTSFISTKRLENSAPSPTSPLMARRTRSTMTKALLNLKAEINNQYQELARLRKKKDDIEHLRDSTISDIYSGSYSTNHLQKHSMRIRANTQLREIDNSIKRVEKHIFDLKQQFDKKRQRSLTTSSSIKADVGSIRNDDGQNNDSEELGDHDSLTDQVTLDDEYLTTPTSGTERNSQQNLNRNSTVNSRNNENHSTLSIPDLDGSNKVNLTGDTEKDLGDLENENQIFTSTTTEAATWLVSDYMQSFQEKNVNPDFIAQKANGLVTLLKEHSEIRKDLVLTSFMSSIQNLLLNGNKLIAASAYRVCRYLINSSIFIDELLELRLDAFIIISLAKDNSFQIEREQALKMVRRFIEYNNGVTQGIMQAIISCVEKPEDSLRHMALETLLELCFVAPEMVKECRGMRVIEGFLQDYTSFSLASVILDTILQLMATHKTRQHFLEDFNVSVLTTVFSDTNTKSNVNVEKMQNASTLISITLNSYNGFMLFSNNNFKPLKQLVSFFQIPICAQYLIDIFLDVLKIKPLPYKPRGRHSHSFKPIPSQYYKECMSVNQRLALIVLILENSEFVPHLLELLNEEDRDDHLVAKGRYLLTEYFNLRMNLVDKKYTSVSKPIYKENFTYVNETFQFKKIAYKMNRNRNTIGMSGIDYAQNIKSFSKNIKENTLLREVDDFRFRRMVYDSKVLQTKDFTRWNWNIINELLEGPLLNKKQLEELVKSTKFIRRLLVFYRPLRLRFSNVNKGAKLSQKYVQVGCQFFKTLTATPEGMKILMDDTKIIPQLASLMFRAMEGNISGNIFNKNKLREKIIFGYFKFIGILTQSKNGVHILTRWNFFTVIYKMFQFESKLGLEFLLLTIPELDLKYSSHCRVIIGKALVVANEKVRIEATKHIGDKLKELLSTKESDLKLKANKVKLQQFKMEMLTRQLYDLSPSVVAVADQALYECIVAGNGSEELGTSFRMFLNQMVFIRSPILFELLSRPYGFQLLNEINFVKEERDSWLSKKNIEYVHIVEEFLKKNESINAKSLTFQQKSRLPLHFYESLTKTEDGILLLSQTGDLVTFMNVIKKYVNGNNMATVENAKEILDLKAALWCVGFIGSTELGIGLLDNYSLVEDIIEVAYNASVTSVRFTAFYVLGLISMTREGCEILDEMGWNCCVSVQDEPIGIALPNRLDRFLSYNEHKWSAFGEYSDEMIVFNKSDGDLIEKCLPIEFDLDKLLKEKDTAENPLNEKIITNKYDNDITSQTITVSGENSSLFANEGLSSPYVTQYRNDDDSIESKVLHIVSQLGNHILSNHAVKEITEINNKYGPRLFENEKMFFKVFNMMSKYRFKPHVRKFLCGLFINNRALENVIRHDNKRDKRPANFTR.

The interval 1 to 62 is disordered; that stretch reads MSIPHSAKQS…TITNESSKRN (62 aa). Polar residues-rich tracts occupy residues 7 to 26 and 35 to 44; these read AKQS…TTPL and NSSTQISSAK. Ser-19 bears the Phosphoserine mark. Residues 45-57 show a composition bias toward low complexity; sequence NITSSSPSTITNE. 4 positions are modified to phosphoserine: Ser-81, Ser-84, Ser-87, and Ser-141. Residues 91–180 are a coiled coil; the sequence is ARRTRSTMTK…EKHIFDLKQQ (90 aa). Residues 182–285 form a disordered region; sequence DKKRQRSLTT…NLTGDTEKDL (104 aa). Residues 233–265 show a composition bias toward polar residues; sequence TTPTSGTERNSQQNLNRNSTVNSRNNENHSTLS. The region spanning 995-1100 is the N-terminal Ras-GEF domain; it reads SVVAVADQAL…FQQKSRLPLH (106 aa).

It belongs to the RICTOR family. In terms of assembly, the target of rapamycin complex 2 (TORC2) is composed of at least AVO1, AVO2, BIT61, LST8, TOR2 and TSC11. TORC2 forms a homodimer. Contrary to TORC1, TORC2 does not bind to and is not sensitive to FKBP-rapamycin. TSC11 binds to the N-terminal HEAT repeat region in TOR2 and is required for TORC2 integrity by tethering AVO1 and AVO2 to the complex. In terms of processing, phosphorylated by TOR2; when part of TORC2.

The protein resides in the cell membrane. It is found in the vacuole membrane. Functionally, essential component of TORC2, which regulates cell cycle-dependent polarization of the actin-cytoskeleton and cell wall integrity. TORC2 controls polarity of the actin cytoskeleton, which is required for orienting the secretory pathway toward discrete growth sites, via the RHO1/PKC1/MAPK cell integrity pathway. TSC11 may exert its functions through two distinct mechanisms, one mediated by AVO1 and the other mediated by AVO2 and SLM1. The polypeptide is Target of rapamycin complex 2 subunit TSC11 (TSC11) (Saccharomyces cerevisiae (strain ATCC 204508 / S288c) (Baker's yeast)).